A 573-amino-acid chain; its full sequence is Dilute domain-containing protein SPAC25B8.08 (573 aa).

Residues 180–464 form the Dilute domain; the sequence is NAFLCEVNQV…LKKLDAFHEE (285 aa).

It is found in the cytoplasm. The protein localises to the golgi apparatus. This Schizosaccharomyces pombe (strain 972 / ATCC 24843) (Fission yeast) protein is Dilute domain-containing protein SPAC25B8.08.